An 834-amino-acid chain; its full sequence is Periplasmic nitrate reductase (834 aa).

Residues 1 to 32 constitute a signal peptide (tat-type signal); it reads MTEPKIDRRQLLKLEAAAIAAAAAGMPTVARA. A 4Fe-4S Mo/W bis-MGD-type domain is found at 44–100; it reads LKWDKAACRFCGTGCSVMVATKDNRVVATHGDIKAEVNRGLNCVKGYFLSKIMYGHD. The [4Fe-4S] cluster site is built by C51, C54, C58, and C86. Mo-bis(molybdopterin guanine dinucleotide) contacts are provided by residues K88, Q155, N180, C184, 217 to 224, 248 to 252, 267 to 269, M378, Q382, N488, 514 to 515, K537, D564, and 724 to 733; these read WGSNMAEM, STFEH, QTD, SD, and TGRVVEHWHS. W800 provides a ligand contact to substrate. Mo-bis(molybdopterin guanine dinucleotide) is bound by residues N808 and K825.

It belongs to the prokaryotic molybdopterin-containing oxidoreductase family. NasA/NapA/NarB subfamily. As to quaternary structure, component of the periplasmic nitrate reductase NapAB complex composed of NapA and NapB. Requires [4Fe-4S] cluster as cofactor. It depends on Mo-bis(molybdopterin guanine dinucleotide) as a cofactor. Predicted to be exported by the Tat system. The position of the signal peptide cleavage has not been experimentally proven.

The protein resides in the periplasm. The catalysed reaction is 2 Fe(II)-[cytochrome] + nitrate + 2 H(+) = 2 Fe(III)-[cytochrome] + nitrite + H2O. Its function is as follows. Catalytic subunit of the periplasmic nitrate reductase complex NapAB. Receives electrons from NapB and catalyzes the reduction of nitrate to nitrite. This chain is Periplasmic nitrate reductase, found in Bradyrhizobium sp. (strain ORS 278).